Here is a 142-residue protein sequence, read N- to C-terminus: Hemoglobin subunit zeta (142 aa).

The residue at position 2 (Ser2) is an N-acetylserine. Positions 2–142 (SLTKAERTMV…VSSVLTEKYR (141 aa)) constitute a Globin domain. Ser53 is subject to Phosphoserine. His59 contributes to the heme b binding site. Ser73 carries the post-translational modification Phosphoserine. Residue His88 participates in heme b binding.

It belongs to the globin family. Heterotetramer of two zeta chains and beta-type chains.

Functionally, the zeta chain is an alpha-type chain of mammalian embryonic hemoglobin. The protein is Hemoglobin subunit zeta (HBZ1) of Equus caballus (Horse).